Here is a 122-residue protein sequence, read N- to C-terminus: NLLQFENMIRNVAGRSGIWWYSDYGCYCGKGGHGRPQDASDRCCFVHDCCYGKVNGCNPKKAVYIYSLENGDIVCGGDDPCRKEVCECDKAAAICFRDNKDTYDNKYWNIPSENCQEESEPC.

7 disulfides stabilise this stretch: Cys-26–Cys-115, Cys-28–Cys-44, Cys-43–Cys-95, Cys-49–Cys-122, Cys-50–Cys-88, Cys-57–Cys-81, and Cys-75–Cys-86. Ca(2+) contacts are provided by Tyr-27, Gly-29, and Gly-31. His-47 is an active-site residue. Asp-48 provides a ligand contact to Ca(2+). Residue Asp-89 is part of the active site.

This sequence belongs to the phospholipase A2 family. Group II subfamily. D49 sub-subfamily. It depends on Ca(2+) as a cofactor. Expressed by the venom gland.

It localises to the secreted. The catalysed reaction is a 1,2-diacyl-sn-glycero-3-phosphocholine + H2O = a 1-acyl-sn-glycero-3-phosphocholine + a fatty acid + H(+). Its function is as follows. Snake venom phospholipase A2 (PLA2) that has high lipolytic activity. PLA2 catalyzes the calcium-dependent hydrolysis of the 2-acyl groups in 3-sn-phosphoglycerides. This is Acidic phospholipase A2 2 from Craspedocephalus gramineus (Bamboo pit viper).